The following is a 488-amino-acid chain: Transmembrane protein 39A-B (488 aa).

N-linked (GlcNAc...) asparagine glycans are attached at residues Asn-31 and Asn-39. 3 helical membrane-spanning segments follow: residues 72–92 (GLVF…TQYI), 110–130 (TSLN…VMLA), and 155–175 (LIIG…WTTV). N-linked (GlcNAc...) asparagine glycosylation occurs at Asn-180. A helical transmembrane segment spans residues 182-202 (SVLNLLFLGYPFGVYVPLCCF). The N-linked (GlcNAc...) asparagine glycan is linked to Asn-206. 4 consecutive transmembrane segments (helical) span residues 287–307 (EVLF…LCFV), 319–339 (CEHL…QLLP), 420–440 (LLNL…YSLL), and 446–466 (NHTL…FKLL).

The protein belongs to the TMEM39 family.

It is found in the membrane. This Xenopus laevis (African clawed frog) protein is Transmembrane protein 39A-B (tmem39a-b).